We begin with the raw amino-acid sequence, 390 residues long: Complement decay-accelerating factor, GPI-anchored (390 aa).

The N-terminal stretch at 1–34 (MIRGRAPRTRPSPPPPLLPLLSLSLLLLSPTVRG) is a signal peptide. 4 Sushi domains span residues 35–96 (DCGP…FCEK), 97–160 (SCVA…FCKK), 161–222 (KSCP…VCTE), and 223–286 (IHCP…RCIE). Intrachain disulfides connect cysteine 36–cysteine 81, cysteine 65–cysteine 94, cysteine 98–cysteine 145, cysteine 129–cysteine 158, cysteine 163–cysteine 204, cysteine 190–cysteine 220, cysteine 225–cysteine 267, and cysteine 253–cysteine 284. Asparagine 187 carries N-linked (GlcNAc...) asparagine glycosylation. Asparagine 262 is a glycosylation site (N-linked (GlcNAc...) asparagine). The segment at 273–362 (DVGQWSSPPP…STDKGEPNTG (90 aa)) is disordered. Polar residues-rich tracts occupy residues 298–319 (NVPS…VPNP) and 327–344 (KPST…VTKT). Glycine 362 carries GPI-anchor amidated glycine lipidation. The propeptide at 363–390 (GDRYIYGHTCLITLTVLHVMLSLIGYLT) is removed in mature form.

It belongs to the receptors of complement activation (RCA) family. Brain, secretory epithelia, skeletal muscle, liver, testes, thymus, spleen and lymph node.

It localises to the cell membrane. Functionally, this protein recognizes C4b and C3b fragments that condense with cell-surface hydroxyl or amino groups when nascent C4b and C3b are locally generated during C4 and c3 activation. Interaction of daf with cell-associated C4b and C3b polypeptides interferes with their ability to catalyze the conversion of C2 and factor B to enzymatically active C2a and Bb and thereby prevents the formation of C4b2a and C3bBb, the amplification convertases of the complement cascade. Inhibits complement activation by destabilizing and preventing the formation of C3 and C5 convertases, which prevents complement damage. In Mus musculus (Mouse), this protein is Complement decay-accelerating factor, GPI-anchored (Cd55).